Here is a 387-residue protein sequence, read N- to C-terminus: Paralemmin-1 (387 aa).

Methionine 1 is modified (N-acetylmethionine). Residues 9-101 (TSQQERLQAI…EKEIEVLERG (93 aa)) adopt a coiled-coil conformation. Basic and acidic residues-rich tracts occupy residues 31–41 (KRRQLEDERRQ) and 69–102 (DLRR…ERGD). Residues 31 to 160 (KRRQLEDERR…VSNTPLRTVD (130 aa)) form a disordered region. Positions 104 to 117 (APATAKENAAAPSP) are enriched in low complexity. Residues serine 116 and serine 124 each carry the phosphoserine modification. Threonine 141 and threonine 145 each carry phosphothreonine. Residue serine 162 is modified to Phosphoserine. At threonine 243 the chain carries Phosphothreonine. Serine 245 carries the post-translational modification Phosphoserine. Disordered stretches follow at residues 247 to 296 (AGST…GQEP) and 335 to 378 (AEPK…DMKK). The span at 286 to 296 (GPPGIQPGQEP) shows a compositional bias: low complexity. Serine 346 carries the post-translational modification Phosphoserine. Threonine 367 carries the phosphothreonine modification. A Phosphoserine modification is found at serine 369. 2 S-palmitoyl cysteine lipidation sites follow: cysteine 381 and cysteine 383. Cysteine 384 is modified (cysteine methyl ester). The S-farnesyl cysteine moiety is linked to residue cysteine 384. A propeptide spans 385–387 (SIM) (removed in mature form).

The protein belongs to the paralemmin family. Interacts with dopamine receptor DRD3. Widely expressed with highest expression in brain and testis and intermediate expression in heart and adrenal gland.

It localises to the cell membrane. The protein resides in the cell projection. Its subcellular location is the filopodium membrane. The protein localises to the axon. It is found in the dendrite. It localises to the dendritic spine. The protein resides in the basolateral cell membrane. Its subcellular location is the apicolateral cell membrane. Involved in plasma membrane dynamics and cell process formation. Isoform 1 and isoform 2 are necessary for axonal and dendritic filopodia induction, for dendritic spine maturation and synapse formation in a palmitoylation-dependent manner. This Homo sapiens (Human) protein is Paralemmin-1 (PALM).